The chain runs to 112 residues: Histone H3-4 (112 aa).

Positions 1 to 31 (QTGAKAPRKALANKAARKTAPADGGVKKPHR) are disordered.

It belongs to the histone H3 family. The nucleosome is a histone octamer containing two molecules each of H2A, H2B, H3 and H4 assembled in one H3-H4 heterotetramer and two H2A-H2B heterodimers. The octamer wraps approximately 147 bp of DNA.

The protein localises to the nucleus. The protein resides in the chromosome. Core component of nucleosome. Nucleosomes wrap and compact DNA into chromatin, limiting DNA accessibility to the cellular machineries which require DNA as a template. Histones thereby play a central role in transcription regulation, DNA repair, DNA replication and chromosomal stability. DNA accessibility is regulated via a complex set of post-translational modifications of histones, also called histone code, and nucleosome remodeling. In Stylonychia lemnae (Ciliate), this protein is Histone H3-4 (H3-4).